The sequence spans 261 residues: Cytochrome c oxidase subunit 3 (261 aa).

Residues 1-15 (MTHQTHAYHMVNPSP) are Mitochondrial matrix-facing. A helical membrane pass occupies residues 16 to 34 (WPLTGALSALLMTSGLIMW). Residues 35-40 (FHFNST) lie on the Mitochondrial intermembrane side of the membrane. A helical membrane pass occupies residues 41–66 (TLLMLGLTTNMLTMYQWWRDVVREST). At 67–72 (FQGHHT) the chain is on the mitochondrial matrix side. The chain crosses the membrane as a helical span at residues 73–105 (PNVQKGLRYGMILFIISEVLFFTGFFWAFYHSS). Over 106-128 (LAPTPELGGCWPPTGINPLNPLE) the chain is Mitochondrial intermembrane. Residues 129–152 (VPLLNTSVLLASGVSITWAHHSLM) form a helical membrane-spanning segment. Topologically, residues 153–155 (EGN) are mitochondrial matrix. A helical transmembrane segment spans residues 156-183 (RNHMLQALFITIALGVYFTLLQASEYYE). Topologically, residues 184-190 (APFTISD) are mitochondrial intermembrane. The chain crosses the membrane as a helical span at residues 191–223 (GVYGSTFFVATGFHGLHVIIGSTFLIVCFFRQL). Topologically, residues 224–232 (KFHFTSNHH) are mitochondrial matrix. A helical transmembrane segment spans residues 233–256 (FGFEAAAWYWHFVDVVWLFLYVSI). Over 257–261 (YWWGS) the chain is Mitochondrial intermembrane.

This sequence belongs to the cytochrome c oxidase subunit 3 family. Component of the cytochrome c oxidase (complex IV, CIV), a multisubunit enzyme composed of 14 subunits. The complex is composed of a catalytic core of 3 subunits MT-CO1, MT-CO2 and MT-CO3, encoded in the mitochondrial DNA, and 11 supernumerary subunits COX4I, COX5A, COX5B, COX6A, COX6B, COX6C, COX7A, COX7B, COX7C, COX8 and NDUFA4, which are encoded in the nuclear genome. The complex exists as a monomer or a dimer and forms supercomplexes (SCs) in the inner mitochondrial membrane with NADH-ubiquinone oxidoreductase (complex I, CI) and ubiquinol-cytochrome c oxidoreductase (cytochrome b-c1 complex, complex III, CIII), resulting in different assemblies (supercomplex SCI(1)III(2)IV(1) and megacomplex MCI(2)III(2)IV(2)).

Its subcellular location is the mitochondrion inner membrane. It catalyses the reaction 4 Fe(II)-[cytochrome c] + O2 + 8 H(+)(in) = 4 Fe(III)-[cytochrome c] + 2 H2O + 4 H(+)(out). In terms of biological role, component of the cytochrome c oxidase, the last enzyme in the mitochondrial electron transport chain which drives oxidative phosphorylation. The respiratory chain contains 3 multisubunit complexes succinate dehydrogenase (complex II, CII), ubiquinol-cytochrome c oxidoreductase (cytochrome b-c1 complex, complex III, CIII) and cytochrome c oxidase (complex IV, CIV), that cooperate to transfer electrons derived from NADH and succinate to molecular oxygen, creating an electrochemical gradient over the inner membrane that drives transmembrane transport and the ATP synthase. Cytochrome c oxidase is the component of the respiratory chain that catalyzes the reduction of oxygen to water. Electrons originating from reduced cytochrome c in the intermembrane space (IMS) are transferred via the dinuclear copper A center (CU(A)) of subunit 2 and heme A of subunit 1 to the active site in subunit 1, a binuclear center (BNC) formed by heme A3 and copper B (CU(B)). The BNC reduces molecular oxygen to 2 water molecules using 4 electrons from cytochrome c in the IMS and 4 protons from the mitochondrial matrix. The sequence is that of Cytochrome c oxidase subunit 3 (MT-CO3) from Gazella leptoceros (Sand gazelle).